The sequence spans 76 residues: Acyl carrier protein (76 aa).

In terms of domain architecture, Carrier spans 1–76; sequence MDTFESVKAV…DVVAYIEANK (76 aa). At Ser-36 the chain carries O-(pantetheine 4'-phosphoryl)serine.

It belongs to the acyl carrier protein (ACP) family. Post-translationally, 4'-phosphopantetheine is transferred from CoA to a specific serine of apo-ACP by AcpS. This modification is essential for activity because fatty acids are bound in thioester linkage to the sulfhydryl of the prosthetic group.

The protein localises to the cytoplasm. It functions in the pathway lipid metabolism; fatty acid biosynthesis. In terms of biological role, carrier of the growing fatty acid chain in fatty acid biosynthesis. This Helicobacter hepaticus (strain ATCC 51449 / 3B1) protein is Acyl carrier protein.